Consider the following 329-residue polypeptide: Biotin synthase (329 aa).

One can recognise a Radical SAM core domain in the interval 48–278 (FVGDKVYLCS…SKKISVCGGR (231 aa)). Cys66, Cys70, and Cys73 together coordinate [4Fe-4S] cluster. [2Fe-2S] cluster contacts are provided by Ser143 and Cys203.

This sequence belongs to the radical SAM superfamily. Biotin synthase family. In terms of assembly, homodimer. The cofactor is [4Fe-4S] cluster. [2Fe-2S] cluster is required as a cofactor.

It catalyses the reaction (4R,5S)-dethiobiotin + (sulfur carrier)-SH + 2 reduced [2Fe-2S]-[ferredoxin] + 2 S-adenosyl-L-methionine = (sulfur carrier)-H + biotin + 2 5'-deoxyadenosine + 2 L-methionine + 2 oxidized [2Fe-2S]-[ferredoxin]. It functions in the pathway cofactor biosynthesis; biotin biosynthesis; biotin from 7,8-diaminononanoate: step 2/2. Its function is as follows. Catalyzes the conversion of dethiobiotin (DTB) to biotin by the insertion of a sulfur atom into dethiobiotin via a radical-based mechanism. This Geotalea uraniireducens (strain Rf4) (Geobacter uraniireducens) protein is Biotin synthase.